The following is a 554-amino-acid chain: MRRPLSKCGMEPGGGDASLTLHGLQNRSHGKIKLRKRKSTLYFNTQEKSARRRGDLLGENIYLLLFTIALRILNCFLVQTSFVPDEYWQSLEVSHHMVFNYGYLTWEWTERLRSYTYPLIFASIYKILHLLGKDSVQLLIWIPRLAQALLSAVADVRLYSLMKQLENQEVARWVFFCQLCSWFTWYCCTRTLTNTMETVLTIIALFYYPLEGSKSMNSVKYSSLVALAFIIRPTAVILWTPLLFRHFCQEPRKLDLILHHFLPVGFVTLSLSLMIDRIFFGQWTLVQFNFLKFNVLQNWGTFYGSHPWHWYFSQGFPVILGTHLPFFIHGCYLAPKRYRILLVTVLWTLLVYSMLSHKEFRFIYPVLPFCMVFCGYSLTHLKTWKKPALSFLFLSNLFLALYTGLVHQRGTLDVMSHIQKVCYNNPNKSSASIFIMMPCHSTPYYSHVHCPLPMRFLQCPPDLTGKSHYLDEADVFYLNPLNWLHREFHDDASLPTHLITFSILEEEISAFLISSNYKRTAVFFHTHLPEGRIGSHIYVYERKLKGKFNMKMKF.

N-linked (GlcNAc...) asparagine glycosylation is present at asparagine 26. A run of 9 helical transmembrane segments spans residues 63-83 (LLLF…TSFV), 136-156 (VQLL…VADV), 192-212 (LTNT…PLEG), 224-244 (LVAL…PLLF), 255-275 (DLIL…SLMI), 315-335 (GFPV…YLAP), 340-360 (ILLV…HKEF), 362-382 (FIYP…THLK), and 387-407 (PALS…GLVH). Asparagine 427 carries an N-linked (GlcNAc...) asparagine glycan.

Belongs to the glycosyltransferase 22 family. PIGB subfamily.

Its subcellular location is the endoplasmic reticulum membrane. Its pathway is glycolipid biosynthesis; glycosylphosphatidylinositol-anchor biosynthesis. Functionally, alpha-1,2-mannosyltransferase that catalyzes the transfer of the third mannose, via an alpha-1,2 bond, from a dolichol-phosphate-mannose (Dol-P-Man) to an alpha-D-Man-(1-&gt;6)-2-PEtn-alpha-D-Man-(1-&gt;4)-alpha-D-GlcN-(1-&gt;6)-(1-radyl,2-acyl-sn-glycero-3-phospho)-2-acyl-inositol intermediate to generate an alpha-D-Man-(1-&gt;2)-alpha-D-Man-(1-&gt;6)-2-PEtn-alpha-D-Man-(1-&gt;4)-alpha-D-GlcN-(1-&gt;6)-(1-radyl,2-acyl-sn-glycero-3-phospho)-2-acyl-inositol (also termed H6) and participates in the nineth step of the glycosylphosphatidylinositol-anchor biosynthesis. May also add the third mannose to an alpha-D-Man-(1-&gt;6)-alpha-D-Man-(1-&gt;4)-alpha-D-GlcN-(1-&gt;6)-(1-radyl,2-acyl-sn-glycero-3-phospho)-2-acyl-inositol (also termed H3) intermediate generating an alpha-D-Man-(1-&gt;2)-alpha-D-Man-(1-&gt;6)-alpha-D-Man-(1-&gt;4)-alpha-D-GlcN-(1-&gt;6)-(1-radyl,2-acyl-sn-glycero-3-phospho)-2-acyl-inositol (also termed H4). The sequence is that of GPI alpha-1,2-mannosyltransferase 3 from Homo sapiens (Human).